Here is a 461-residue protein sequence, read N- to C-terminus: Argininosuccinate lyase (461 aa).

Belongs to the lyase 1 family. Argininosuccinate lyase subfamily.

It localises to the cytoplasm. It carries out the reaction 2-(N(omega)-L-arginino)succinate = fumarate + L-arginine. It functions in the pathway amino-acid biosynthesis; L-arginine biosynthesis; L-arginine from L-ornithine and carbamoyl phosphate: step 3/3. The polypeptide is Argininosuccinate lyase (Aeromonas hydrophila subsp. hydrophila (strain ATCC 7966 / DSM 30187 / BCRC 13018 / CCUG 14551 / JCM 1027 / KCTC 2358 / NCIMB 9240 / NCTC 8049)).